A 504-amino-acid polypeptide reads, in one-letter code: Trifunctional (S)-stylopine synthase/(S)-nandinine synthase/(S)-canadine synthase (504 aa).

Residues 16–36 traverse the membrane as a helical segment; the sequence is SSTTTTTTILLSLLFTIFIIL. Heme is bound at residue Cys-448.

Belongs to the cytochrome P450 family. Heme is required as a cofactor. In terms of tissue distribution, expressed in roots and at lower levels in stems, leaves and plantlets.

It localises to the endoplasmic reticulum membrane. The catalysed reaction is (S)-cheilanthifoline + reduced [NADPH--hemoprotein reductase] + O2 = (S)-stylopine + oxidized [NADPH--hemoprotein reductase] + 2 H2O + H(+). The enzyme catalyses (S)-tetrahydrocolumbamine + reduced [NADPH--hemoprotein reductase] + O2 = (S)-canadine + oxidized [NADPH--hemoprotein reductase] + 2 H2O + H(+). It catalyses the reaction (S)-scoulerine + reduced [NADPH--hemoprotein reductase] + O2 = (S)-nandinine + oxidized [NADPH--hemoprotein reductase] + 2 H2O + H(+). Methylenedioxy bridge-forming cytochrome P450 involved in the biosynthesis of isoquinoline alkaloids. Converts (S)-cheilanthifoline to (S)-stylopine, (S)-scoulerine to (S)-nandinine and (S)-tetrahydrocolumbamine to (S)-canadine. Can be involved in both sanguinarine and berberine biosynthesis. Catalyzes an oxidative reaction that does not incorporate oxygen into the product. The chain is Trifunctional (S)-stylopine synthase/(S)-nandinine synthase/(S)-canadine synthase from Argemone mexicana (Mexican prickly poppy).